The following is a 220-amino-acid chain: Claudin-22 (220 aa).

The Cytoplasmic portion of the chain corresponds to 1-10; that stretch reads MALVFRTVAQ. The chain crosses the membrane as a helical span at residues 11–30; it reads LAGVSLSLLGWVLSCLTNYL. Topologically, residues 31 to 81 are extracellular; the sequence is PHWKNLNLDLNEMENWTMGLWQTCVIQEEVGMQCKDFDSFLALPAELRVSR. The helical transmembrane segment at 82 to 102 threads the bilayer; the sequence is ILMFLSNGLGFLGLLVSGFGL. Over 103–117 the chain is Cytoplasmic; the sequence is DCLRIGESQRDLKRR. The chain crosses the membrane as a helical span at residues 118 to 138; sequence LLILGGILSWASGVTALVPVS. Residues 139 to 164 lie on the Extracellular side of the membrane; the sequence is WVAHKTVQEFWDENVPDFVPRWEFGE. A helical membrane pass occupies residues 165-185; the sequence is ALFLGWFAGLSLLLGGCLLHC. Over 186–220 the chain is Cytoplasmic; sequence AACSSHAPLASGHYAVAQTQDHHQELETRNTNLKH.

The protein belongs to the claudin family.

Its subcellular location is the cell junction. It localises to the tight junction. The protein resides in the cell membrane. Functionally, plays a major role in tight junction-specific obliteration of the intercellular space, through calcium-independent cell-adhesion activity. The protein is Claudin-22 (CLDN22) of Homo sapiens (Human).